The chain runs to 525 residues: Glucose-6-phosphate isomerase (525 aa).

Glu-356 functions as the Proton donor in the catalytic mechanism. Active-site residues include His-387 and Lys-502.

Belongs to the GPI family.

It localises to the cytoplasm. The catalysed reaction is alpha-D-glucose 6-phosphate = beta-D-fructose 6-phosphate. Its pathway is carbohydrate biosynthesis; gluconeogenesis. It functions in the pathway carbohydrate degradation; glycolysis; D-glyceraldehyde 3-phosphate and glycerone phosphate from D-glucose: step 2/4. In terms of biological role, catalyzes the reversible isomerization of glucose-6-phosphate to fructose-6-phosphate. This is Glucose-6-phosphate isomerase from Treponema denticola (strain ATCC 35405 / DSM 14222 / CIP 103919 / JCM 8153 / KCTC 15104).